A 276-amino-acid polypeptide reads, in one-letter code: Small ribosomal subunit protein uS2 (276 aa).

A disordered region spans residues 255 to 276 (ASATATAAPTEAGAPEPTTDPS).

This sequence belongs to the universal ribosomal protein uS2 family.

In Mycolicibacterium paratuberculosis (strain ATCC BAA-968 / K-10) (Mycobacterium paratuberculosis), this protein is Small ribosomal subunit protein uS2.